The primary structure comprises 284 residues: Pantothenate synthetase (284 aa).

Residue 30-37 (MGALHDGH) coordinates ATP. The Proton donor role is filled by His-37. Gln-61 lines the (R)-pantoate pocket. Gln-61 serves as a coordination point for beta-alanine. 147–150 (GEKD) is a binding site for ATP. Residue Gln-153 coordinates (R)-pantoate. Residues Val-176 and 184–187 (KSSR) each bind ATP.

It belongs to the pantothenate synthetase family. As to quaternary structure, homodimer.

It localises to the cytoplasm. It catalyses the reaction (R)-pantoate + beta-alanine + ATP = (R)-pantothenate + AMP + diphosphate + H(+). The protein operates within cofactor biosynthesis; (R)-pantothenate biosynthesis; (R)-pantothenate from (R)-pantoate and beta-alanine: step 1/1. Its function is as follows. Catalyzes the condensation of pantoate with beta-alanine in an ATP-dependent reaction via a pantoyl-adenylate intermediate. The sequence is that of Pantothenate synthetase from Chloroherpeton thalassium (strain ATCC 35110 / GB-78).